The chain runs to 259 residues: Putative protein-tyrosine sulfotransferase (259 aa).

C13 and C68 are oxidised to a cystine. E16 functions as the Proton donor/acceptor in the catalytic mechanism. N36 carries an N-linked (GlcNAc...) asparagine glycan. Positions 95, 103, and 107 each coordinate 3'-phosphoadenylyl sulfate. N115 carries an N-linked (GlcNAc...) asparagine glycan. A disulfide bridge connects residues C137 and C144. 3'-phosphoadenylyl sulfate is bound by residues Y149 and 194 to 203 (SASQVKNSIN).

This sequence belongs to the protein sulfotransferase family.

It carries out the reaction L-tyrosyl-[protein] + 3'-phosphoadenylyl sulfate = O-sulfo-L-tyrosine-[protein] + adenosine 3',5'-bisphosphate + H(+). Functionally, catalyzes the O-sulfation of tyrosine residues within acidic motifs of polypeptides, using 3'-phosphoadenylyl sulfate (PAPS) as cosubstrate. The polypeptide is Putative protein-tyrosine sulfotransferase (tpst-2) (Caenorhabditis elegans).